The primary structure comprises 92 residues: Small ribosomal subunit protein uS19 (92 aa).

Belongs to the universal ribosomal protein uS19 family.

In terms of biological role, protein S19 forms a complex with S13 that binds strongly to the 16S ribosomal RNA. This is Small ribosomal subunit protein uS19 from Nostoc sp. (strain PCC 7120 / SAG 25.82 / UTEX 2576).